A 463-amino-acid polypeptide reads, in one-letter code: Sodium-coupled neutral amino acid transporter 7 (463 aa).

S28 carries the post-translational modification Phosphoserine. 11 helical membrane passes run 56-76 (AVFI…PAAF), 82-102 (VAAG…GLVI), 130-150 (LCEV…LIII), 179-199 (FTIS…KEIG), 206-226 (FLSV…YIWP), 240-260 (ASWM…QCHV), 283-303 (AAMV…FLTF), 320-340 (VAVA…YPIL), 372-392 (VLQT…IPDI), 396-416 (ISVI…LCLI), and 429-449 (ASWW…AFIF).

Belongs to the amino acid/polyamine transporter 2 family. As to quaternary structure, interacts with the mTORC1 complex; this interaction mediates the recruitment of mTORC1 to the lysosome and its subsequent activation. In terms of tissue distribution, highly expressed in the brain, including the hippocampus, especially in the granular layer of dentate gyrus cells and the pyramidal cell layer of the hippocampus, amygdala, thalamus, hypothalamus, in the layer of Purkinje cells in the cerebellum and the layers of cortex. Particularly strong expression in neurons of the ventromedial hypothalamus, basolateral amygdala, ventral tegmental area, and locus coeruleus. Not detected in glial cells, including astrocytes. In addition to brain, also expressed in the spinal cord (at protein level).

It is found in the lysosome membrane. The protein resides in the cell projection. Its subcellular location is the axon. The catalysed reaction is L-glutamine(in) + Na(+)(in) = L-glutamine(out) + Na(+)(out). The enzyme catalyses L-asparagine(in) + Na(+)(in) = L-asparagine(out) + Na(+)(out). In terms of biological role, symporter that selectively cotransports sodium ions and amino acids, such as L-glutamine and L-asparagine from the lysosome into the cytoplasm and may participates in mTORC1 activation. The transport activity requires an acidic lysosomal lumen. This is Sodium-coupled neutral amino acid transporter 7 from Mus musculus (Mouse).